The primary structure comprises 112 residues: Large ribosomal subunit protein eL33w (112 aa).

Belongs to the eukaryotic ribosomal protein eL33 family.

In Arabidopsis thaliana (Mouse-ear cress), this protein is Large ribosomal subunit protein eL33w (RPL35AA).